A 93-amino-acid chain; its full sequence is Large ribosomal subunit protein uL23 (93 aa).

This sequence belongs to the universal ribosomal protein uL23 family. As to quaternary structure, part of the 50S ribosomal subunit. Contacts protein L29, and trigger factor when it is bound to the ribosome.

In terms of biological role, one of the early assembly proteins it binds 23S rRNA. One of the proteins that surrounds the polypeptide exit tunnel on the outside of the ribosome. Forms the main docking site for trigger factor binding to the ribosome. The protein is Large ribosomal subunit protein uL23 of Helicobacter pylori (strain P12).